The primary structure comprises 367 residues: Beta sliding clamp (367 aa).

The protein belongs to the beta sliding clamp family. As to quaternary structure, forms a ring-shaped head-to-tail homodimer around DNA which binds and tethers DNA polymerases and other proteins to the DNA. The DNA replisome complex has a single clamp-loading complex (3 tau and 1 each of delta, delta', psi and chi subunits) which binds 3 Pol III cores (1 core on the leading strand and 2 on the lagging strand) each with a beta sliding clamp dimer. Additional proteins in the replisome are other copies of gamma, psi and chi, Ssb, DNA helicase and RNA primase.

It is found in the cytoplasm. Functionally, confers DNA tethering and processivity to DNA polymerases and other proteins. Acts as a clamp, forming a ring around DNA (a reaction catalyzed by the clamp-loading complex) which diffuses in an ATP-independent manner freely and bidirectionally along dsDNA. Initially characterized for its ability to contact the catalytic subunit of DNA polymerase III (Pol III), a complex, multichain enzyme responsible for most of the replicative synthesis in bacteria; Pol III exhibits 3'-5' exonuclease proofreading activity. The beta chain is required for initiation of replication as well as for processivity of DNA replication. The sequence is that of Beta sliding clamp (dnaN) from Proteus mirabilis.